The primary structure comprises 78 residues: Acyl carrier protein AcpP (78 aa).

The 76-residue stretch at 2-77 (SDTAERVKKI…DAVKYIDKAS (76 aa)) folds into the Carrier domain. Position 37 is an O-(pantetheine 4'-phosphoryl)serine (Ser37).

It belongs to the acyl carrier protein (ACP) family. 4'-phosphopantetheine is transferred from CoA to a specific serine of apo-ACP by AcpS. This modification is essential for activity because fatty acids are bound in thioester linkage to the sulfhydryl of the prosthetic group.

The protein localises to the cytoplasm. It functions in the pathway lipid metabolism; fatty acid biosynthesis. Carrier of the growing fatty acid chain in fatty acid biosynthesis. In Mesorhizobium japonicum (strain LMG 29417 / CECT 9101 / MAFF 303099) (Mesorhizobium loti (strain MAFF 303099)), this protein is Acyl carrier protein AcpP.